Consider the following 94-residue polypeptide: Neutrophil antibiotic peptide NP-1 (94 aa).

The signal sequence occupies residues 1-19 (MRTLTLLTALLLLALHTQA). Positions 20–62 (KSPQGTAEEAPDQEQLVMEDQDISISFGGDKGTALQDADVKAG) are excised as a propeptide. Intrachain disulfides connect C65–C93, C67–C82, and C72–C92. Position 84 is a phosphotyrosine (Y84).

Belongs to the alpha-defensin family. As to expression, highest expression in bone marrow and to a much lesser extent in small intestine.

It is found in the secreted. Its function is as follows. Active in vitro against S.aureus, fungi, Gram-positive and Gram-negative bacteria and to a lesser extent against an enveloped virus. The protein is Neutrophil antibiotic peptide NP-1 of Rattus norvegicus (Rat).